A 327-amino-acid polypeptide reads, in one-letter code: DNA-directed RNA polymerase subunit alpha (327 aa).

Positions 1-233 (MQNVLKSFLT…HQLAAFVDLK (233 aa)) are alpha N-terminal domain (alpha-NTD). The interval 247 to 327 (VNPLLLRPVE…GWPPADLTDQ (81 aa)) is alpha C-terminal domain (alpha-CTD).

This sequence belongs to the RNA polymerase alpha chain family. In terms of assembly, homodimer. The RNAP catalytic core consists of 2 alpha, 1 beta, 1 beta' and 1 omega subunit. When a sigma factor is associated with the core the holoenzyme is formed, which can initiate transcription.

It carries out the reaction RNA(n) + a ribonucleoside 5'-triphosphate = RNA(n+1) + diphosphate. DNA-dependent RNA polymerase catalyzes the transcription of DNA into RNA using the four ribonucleoside triphosphates as substrates. This Coxiella burnetii (strain CbuK_Q154) (Coxiella burnetii (strain Q154)) protein is DNA-directed RNA polymerase subunit alpha.